The primary structure comprises 348 residues: D-alanine--D-alanine ligase (348 aa).

One can recognise an ATP-grasp domain in the interval 132–334 (KRVLESIGIP…YPDLIEELVT (203 aa)). 162–217 (LARLTFPIFVKPANMGSSVGISKAQTKVELRKAIQLALTYDSRVLIEQGVVAREIE) lines the ATP pocket. 3 residues coordinate Mg(2+): aspartate 288, glutamate 301, and asparagine 303.

The protein belongs to the D-alanine--D-alanine ligase family. Mg(2+) is required as a cofactor. It depends on Mn(2+) as a cofactor.

Its subcellular location is the cytoplasm. It carries out the reaction 2 D-alanine + ATP = D-alanyl-D-alanine + ADP + phosphate + H(+). Its pathway is cell wall biogenesis; peptidoglycan biosynthesis. Functionally, cell wall formation. The chain is D-alanine--D-alanine ligase from Streptococcus pyogenes serotype M6 (strain ATCC BAA-946 / MGAS10394).